The sequence spans 940 residues: UvrABC system protein A (940 aa).

31–38 (GLSGSGKS) is an ATP binding site. The segment at 253–280 (CPICGYSMRELEPRLFSFNNPAGACPTC) adopts a C4-type zinc-finger fold. 2 consecutive ABC transporter domains span residues 310–587 (WDRR…PESL) and 607–937 (ANPE…RFLK). 640 to 647 (GVSGSGKS) serves as a coordination point for ATP. A C4-type zinc finger spans residues 740–766 (CEACQGDGVIKVEMHFLPDIYVPCDQC).

It belongs to the ABC transporter superfamily. UvrA family. As to quaternary structure, forms a heterotetramer with UvrB during the search for lesions.

It is found in the cytoplasm. The UvrABC repair system catalyzes the recognition and processing of DNA lesions. UvrA is an ATPase and a DNA-binding protein. A damage recognition complex composed of 2 UvrA and 2 UvrB subunits scans DNA for abnormalities. When the presence of a lesion has been verified by UvrB, the UvrA molecules dissociate. Its function is as follows. Plays a role in recovery after DNA ADP-ribosylation. This is UvrABC system protein A from Escherichia coli O127:H6 (strain E2348/69 / EPEC).